A 372-amino-acid polypeptide reads, in one-letter code: UDP-N-acetylglucosamine--N-acetylmuramyl-(pentapeptide) pyrophosphoryl-undecaprenol N-acetylglucosamine transferase (372 aa).

Residues 14–16, Asn128, Arg169, Ser201, Ile257, and Gln302 each bind UDP-N-acetyl-alpha-D-glucosamine; that span reads TGG.

The protein belongs to the glycosyltransferase 28 family. MurG subfamily.

It is found in the cell inner membrane. The catalysed reaction is di-trans,octa-cis-undecaprenyl diphospho-N-acetyl-alpha-D-muramoyl-L-alanyl-D-glutamyl-meso-2,6-diaminopimeloyl-D-alanyl-D-alanine + UDP-N-acetyl-alpha-D-glucosamine = di-trans,octa-cis-undecaprenyl diphospho-[N-acetyl-alpha-D-glucosaminyl-(1-&gt;4)]-N-acetyl-alpha-D-muramoyl-L-alanyl-D-glutamyl-meso-2,6-diaminopimeloyl-D-alanyl-D-alanine + UDP + H(+). Its pathway is cell wall biogenesis; peptidoglycan biosynthesis. Functionally, cell wall formation. Catalyzes the transfer of a GlcNAc subunit on undecaprenyl-pyrophosphoryl-MurNAc-pentapeptide (lipid intermediate I) to form undecaprenyl-pyrophosphoryl-MurNAc-(pentapeptide)GlcNAc (lipid intermediate II). The chain is UDP-N-acetylglucosamine--N-acetylmuramyl-(pentapeptide) pyrophosphoryl-undecaprenol N-acetylglucosamine transferase from Bacteroides thetaiotaomicron (strain ATCC 29148 / DSM 2079 / JCM 5827 / CCUG 10774 / NCTC 10582 / VPI-5482 / E50).